Here is a 781-residue protein sequence, read N- to C-terminus: Poly(ADP-ribose) glycohydrolase 1 (781 aa).

3 disordered regions span residues 28-87, 102-131, and 206-232; these read AHQV…VSEN, SLDN…NNKS, and ADST…DADS. Over residues 106-121 the composition is skewed to basic and acidic residues; it reads VTERSEHTLDNHKSTE.

It belongs to the poly(ADP-ribose) glycohydrolase family. Expressed in head and tail neurons. Also detected in the central nerve cord and motor neurons.

Its subcellular location is the nucleus. It carries out the reaction [(1''-&gt;2')-ADP-alpha-D-ribose](n) + H2O = [(1''-&gt;2')-ADP-alpha-D-ribose](n-1) + ADP-D-ribose. Poly(ADP-ribose) synthesized after DNA damage is only present transiently and is rapidly degraded by poly(ADP-ribose) glycohydrolase. Poly(ADP-ribose) metabolism may be required for maintenance of the normal function of neuronal cells. This is Poly(ADP-ribose) glycohydrolase 1 from Caenorhabditis elegans.